A 213-amino-acid polypeptide reads, in one-letter code: LexA repressor (213 aa).

The H-T-H motif DNA-binding region spans 27–47 (QTEIARAFGFKGIRAAQYHLE). Residues Ser-133 and Lys-170 each act as for autocatalytic cleavage activity in the active site.

Belongs to the peptidase S24 family. In terms of assembly, homodimer.

It catalyses the reaction Hydrolysis of Ala-|-Gly bond in repressor LexA.. Its function is as follows. Represses a number of genes involved in the response to DNA damage (SOS response), including recA and lexA. Has been shown to bind to the palindromic sequence 5'-CTG-N(8-12)-C-[TC]-G. In the presence of single-stranded DNA, RecA interacts with LexA causing an autocatalytic cleavage which disrupts the DNA-binding part of LexA, leading to derepression of the SOS regulon and eventually DNA repair. This Xanthomonas citri (Xanthomonas campestris pv. citri) protein is LexA repressor.